The chain runs to 436 residues: UPF0597 protein YhaM (436 aa).

The protein belongs to the UPF0597 family.

The chain is UPF0597 protein YhaM from Salmonella paratyphi A (strain ATCC 9150 / SARB42).